We begin with the raw amino-acid sequence, 393 residues long: Squamosa promoter-binding-like protein 11 (393 aa).

The disordered stretch occupies residues 74–96; it reads QSTSINSSSPEAKRCKLASESSP. The segment at 172 to 249 adopts an SBP-type zinc-finger fold; it reads VPRCQIDGCE…SHHNARRRKP (78 aa). C175, C180, C197, H200, C216, C219, H223, and C235 together coordinate Zn(2+). The Bipartite nuclear localization signal signature appears at 232-248; the sequence is KRSCRKRLSHHNARRRK.

Requires Zn(2+) as cofactor.

It is found in the nucleus. Trans-acting factor that binds specifically to the consensus nucleotide sequence 5'-TNCGTACAA-3'. In Arabidopsis thaliana (Mouse-ear cress), this protein is Squamosa promoter-binding-like protein 11 (SPL11).